Here is a 339-residue protein sequence, read N- to C-terminus: GTPase Era (339 aa).

Residues 4–48 form the RPE1 insert domain; that stretch reads RHLAKFAYREEFKGDTEALAAAVREDASTGSTSQLPLEVQFGKMS. One can recognise an Era-type G domain in the interval 51-220; it reads KTVSVCIIGR…ITSKAKISPW (170 aa). The G1 stretch occupies residues 59–66; the sequence is GRPNSGKS. Position 59–66 (59–66) interacts with GTP; sequence GRPNSGKS. The G2 stretch occupies residues 85-89; the sequence is QTTRS. The tract at residues 106-109 is G3; that stretch reads DTPG. GTP-binding positions include 106–110 and 168–171; these read DTPGI and NKID. Residues 168–171 form a G4 region; sequence NKID. The tract at residues 196-198 is G5; sequence ISA. In terms of domain architecture, KH type-2 spans 248-325; sequence LQKELPYKLT…HLFLFVKVRE (78 aa).

It belongs to the TRAFAC class TrmE-Era-EngA-EngB-Septin-like GTPase superfamily. Era GTPase family. As to quaternary structure, monomer.

Its subcellular location is the cytoplasm. It localises to the cell inner membrane. Functionally, an essential GTPase that binds both GDP and GTP, with rapid nucleotide exchange. Plays a role in 16S rRNA processing and 30S ribosomal subunit biogenesis and possibly also in cell cycle regulation and energy metabolism. The chain is GTPase Era from Rickettsia conorii (strain ATCC VR-613 / Malish 7).